A 291-amino-acid polypeptide reads, in one-letter code: Ribosome maturation factor RimP (291 aa).

The segment at 188–291 (ERGLGEDEEF…GGKPKAKETH (104 aa)) is disordered. A compositionally biased stretch (acidic residues) spans 193–211 (EDEEFEDDADEVFEGDEAD). 2 stretches are compositionally biased toward basic and acidic residues: residues 212 to 237 (EKAAKDAANAERANAKKAADKAEKRA) and 245 to 254 (AKSEKAEKSQ).

This sequence belongs to the RimP family.

Its subcellular location is the cytoplasm. Functionally, required for maturation of 30S ribosomal subunits. This chain is Ribosome maturation factor RimP, found in Azorhizobium caulinodans (strain ATCC 43989 / DSM 5975 / JCM 20966 / LMG 6465 / NBRC 14845 / NCIMB 13405 / ORS 571).